The chain runs to 420 residues: Protein MucB (420 aa).

A UmuC domain is found at 2–187 (FALIDVNGMY…LPVAEVWGVG (186 aa)).

The protein belongs to the DNA polymerase type-Y family.

In terms of biological role, involved in UV protection and mutation. The protein is Protein MucB (mucB) of Escherichia coli.